The sequence spans 385 residues: Cell division protein FtsZ (385 aa).

GTP contacts are provided by residues 37–41 (GGGSN), 125–127 (GTG), Glu156, Lys160, and Asp204.

This sequence belongs to the FtsZ family. In terms of assembly, homodimer. Polymerizes to form a dynamic ring structure in a strictly GTP-dependent manner. Interacts directly with several other division proteins.

Its subcellular location is the cytoplasm. Its function is as follows. Essential cell division protein that forms a contractile ring structure (Z ring) at the future cell division site. The regulation of the ring assembly controls the timing and the location of cell division. One of the functions of the FtsZ ring is to recruit other cell division proteins to the septum to produce a new cell wall between the dividing cells. Binds GTP and shows GTPase activity. This chain is Cell division protein FtsZ, found in Helicobacter pylori (strain J99 / ATCC 700824) (Campylobacter pylori J99).